We begin with the raw amino-acid sequence, 309 residues long: MFCDVQATEPDVKVSLTRVGITNLKKLIKITRESKRPIILLPTFEVFVDLPSSQKGIHMSRSPEVIEEIIESMVDNEVYGIEELSVDIIKKLFEKHEYATRAEVLMYGEYMMEEESPITKRSSQEICKIMSKAHGTKDGNNNIIIKKMVGAEVVGITACPCAQNLLKEKAIKKLKEKGFSDEDIKNILDSVSIATHNQRGIGTIMIEVPDGYEVGISKIINIIKKSMSGEVYELLKRVDEGYVVEEAHKNPKFVEDCAREMIRRVVGEFNYLPDDTEVLVRQVNKESIHRHDAFAERSSTLGELRNELK.

It belongs to the GTP cyclohydrolase IV family. Homodimer. It depends on Fe(2+) as a cofactor.

It carries out the reaction GTP + H2O = 7,8-dihydroneopterin 2',3'-cyclic phosphate + formate + diphosphate + H(+). It functions in the pathway cofactor biosynthesis; 5,6,7,8-tetrahydromethanopterin biosynthesis. Converts GTP to 7,8-dihydro-D-neopterin 2',3'-cyclic phosphate, the first intermediate in the biosynthesis of coenzyme methanopterin. This chain is GTP cyclohydrolase MptA, found in Methanococcus aeolicus (strain ATCC BAA-1280 / DSM 17508 / OCM 812 / Nankai-3).